Reading from the N-terminus, the 65-residue chain is Large ribosomal subunit protein uL29 (65 aa).

The protein belongs to the universal ribosomal protein uL29 family.

The polypeptide is Large ribosomal subunit protein uL29 (Thioalkalivibrio sulfidiphilus (strain HL-EbGR7)).